The following is a 306-amino-acid chain: Agmatinase (306 aa).

Positions 128, 151, 153, 155, 232, and 234 each coordinate Mn(2+).

This sequence belongs to the arginase family. Agmatinase subfamily. Requires Mn(2+) as cofactor.

The enzyme catalyses agmatine + H2O = urea + putrescine. The protein operates within amine and polyamine biosynthesis; putrescine biosynthesis via agmatine pathway; putrescine from agmatine: step 1/1. Functionally, catalyzes the formation of putrescine from agmatine. The polypeptide is Agmatinase (speB) (Proteus mirabilis).